The chain runs to 62 residues: UPF0434 protein Arad_4458 (62 aa).

The protein belongs to the UPF0434 family.

The sequence is that of UPF0434 protein Arad_4458 from Rhizobium rhizogenes (strain K84 / ATCC BAA-868) (Agrobacterium radiobacter).